Here is a 626-residue protein sequence, read N- to C-terminus: Putative ankyrin repeat protein R837 (626 aa).

ANK repeat units lie at residues 42–72, 80–109, 110–139, 140–169, 171–199, 201–230, 242–269, 270–298, 299–328, 330–358, 393–416, 417–446, 452–479, 480–509, 510–539, 540–569, 570–599, and 601–626; these read EYFN…GLIR, TLNT…NHRY, SEDK…NIKS, RNNY…DITV, DYEV…DIKK, NKKR…DVYR, KNYK…YQLS, DTNN…LHEL, NLNQ…DINT, GNSC…RLTS, TIMS…KSSL, DYES…ITKQ, INNS…GINI, CINY…NINE, FGDL…NIYI, IKDN…DYHK, KNEL…KTKT, and FFDP…NEIK.

In Acanthamoeba polyphaga (Amoeba), this protein is Putative ankyrin repeat protein R837.